Consider the following 249-residue polypeptide: uncharacterized protein (249 aa).

This is an uncharacterized protein from Colorado tick fever virus (strain USA/Florio N-7180) (CTFV).